The following is a 413-amino-acid chain: Putative ankyrin repeat protein L92 (413 aa).

8 ANK repeats span residues 1–28 (MCAC…DINC), 32–67 (DGMS…DVNL), 68–104 (TVDG…LFES), 105–134 (DDDD…NIEA), 137–170 (DGET…KTNI), 174–208 (DRKT…NINY), 212–242 (IGET…NPNI), and 246–275 (SGNT…SPEI).

The protein is Putative ankyrin repeat protein L92 of Acanthamoeba polyphaga mimivirus (APMV).